Consider the following 432-residue polypeptide: Transcriptional adapter 3-B (432 aa).

2 disordered regions span residues 90–124 (HELG…PKSR) and 275–315 (SPVE…KSLE). Over residues 293 to 305 (DGASTSPRSQNKP) the composition is skewed to polar residues. Residues 335–398 (ADDSEDEVLA…NEVMDAFRKI (64 aa)) adopt a coiled-coil conformation.

This sequence belongs to the NGG1 family.

It localises to the nucleus. Functions as a component of the PCAF complex. The PCAF complex is capable of efficiently acetylating histones in a nucleosomal context. The sequence is that of Transcriptional adapter 3-B (tada3-b) from Xenopus laevis (African clawed frog).